Consider the following 323-residue polypeptide: Olfactory receptor 51S1 (323 aa).

Residues 1–33 (MSTLPTQIAPNSSTSMAPTFLLVGMPGLSGAPS) lie on the Extracellular side of the membrane. An N-linked (GlcNAc...) asparagine glycan is attached at N11. A helical membrane pass occupies residues 34–54 (WWTLPLIAVYLLSALGNGTIL). Residues 55–62 (WIIALQPA) are Cytoplasmic-facing. A helical membrane pass occupies residues 63 to 83 (LHRPMHFFLFLLSVSDIGLVT). Residues 84 to 107 (ALMPTLLGIALAGAHTVPASACLL) lie on the Extracellular side of the membrane. An intrachain disulfide couples C105 to C197. The chain crosses the membrane as a helical span at residues 108–128 (QMVFIHVFSVMESSVLLAMSI). At 129-147 (DRALAICRPLHYPALLTNG) the chain is on the cytoplasmic side. A helical membrane pass occupies residues 148–168 (VISKISLAISFRCLGLHLPLP). The Extracellular segment spans residues 169–203 (FLLAYMPYCLPQVLTHSYCLHPDVARLACPEAWGA). The helical transmembrane segment at 204–224 (AYSLFVVLSAMGLDPLLIFFS) threads the bilayer. Over 225–244 (YGLIGKVLQGVESREDRWKA) the chain is Cytoplasmic. A helical transmembrane segment spans residues 245 to 265 (GQTCAAHLSAVLLFYIPMILL). At 266-280 (ALINHPELPITQHTH) the chain is on the extracellular side. Residues 281–301 (TLLSYVHFLLPPLINPILYSV) traverse the membrane as a helical segment. Topologically, residues 302-323 (KMKEIRKRILNRLQPRKVGGAQ) are cytoplasmic.

Belongs to the G-protein coupled receptor 1 family.

The protein localises to the cell membrane. Its function is as follows. Odorant receptor. This chain is Olfactory receptor 51S1 (OR51S1), found in Homo sapiens (Human).